The primary structure comprises 113 residues: Protein Wnt-10 (113 aa).

Residue Ser-1 is the site of O-palmitoleoyl serine; by PORCN attachment. A disulfide bridge connects residues Cys-79 and Cys-94.

This sequence belongs to the Wnt family. In terms of processing, palmitoleoylation is required for efficient binding to frizzled receptors. Depalmitoleoylation leads to Wnt signaling pathway inhibition.

Its subcellular location is the secreted. It localises to the extracellular space. The protein resides in the extracellular matrix. Its function is as follows. Ligand for members of the frizzled family of seven transmembrane receptors. Probable developmental protein. May be a signaling molecule which affects the development of discrete regions of tissues. Is likely to signal over only few cell diameters. The chain is Protein Wnt-10 (WNT-10) from Eptatretus stoutii (Pacific hagfish).